The following is a 240-amino-acid chain: MIYNFIDSLIEGKFQKRLNRFVCNVEVNGESRLCHVPNSGRMKELLLPETPVLLQKKQGKQRKTDFDLALVLYEGHWVSVDSRLPNKLFEILVKKSLLPETSVAYGAEFLRREPSYGRGRFDMELMSTNSDRILIELKSVTLVQNNLALFPDAPTDRGRRHLEELTDSLREGYQPAVIFLVQRDDALCFAPNWEMDEAFSKALVQAQEQGVAVESYAFKVTPEGLNYCQRLPVTTQREVE.

It belongs to the SfsA family.

This is Sugar fermentation stimulation protein homolog from Natranaerobius thermophilus (strain ATCC BAA-1301 / DSM 18059 / JW/NM-WN-LF).